A 765-amino-acid chain; its full sequence is Periplasmic beta-glucosidase (765 aa).

The signal sequence occupies residues 1–20; it reads MKWLCSVGVAVSLAMQPALA. Aspartate 287 is a catalytic residue.

It belongs to the glycosyl hydrolase 3 family.

The protein resides in the periplasm. The enzyme catalyses Hydrolysis of terminal, non-reducing beta-D-glucosyl residues with release of beta-D-glucose.. In Salmonella typhimurium (strain LT2 / SGSC1412 / ATCC 700720), this protein is Periplasmic beta-glucosidase (bglX).